Reading from the N-terminus, the 429-residue chain is Ribosomal RNA small subunit methyltransferase B (429 aa).

S-adenosyl-L-methionine is bound by residues 254–260 (CAAPGGK), Asp-277, Asp-303, and Asp-322. The active-site Nucleophile is Cys-375. Residues 397–419 (ALSETGTPDQPGQQNLPGGEEGD) form a disordered region. Over residues 400–412 (ETGTPDQPGQQNL) the composition is skewed to polar residues.

It belongs to the class I-like SAM-binding methyltransferase superfamily. RsmB/NOP family.

The protein localises to the cytoplasm. It catalyses the reaction cytidine(967) in 16S rRNA + S-adenosyl-L-methionine = 5-methylcytidine(967) in 16S rRNA + S-adenosyl-L-homocysteine + H(+). Specifically methylates the cytosine at position 967 (m5C967) of 16S rRNA. This is Ribosomal RNA small subunit methyltransferase B from Salmonella paratyphi A (strain ATCC 9150 / SARB42).